A 904-amino-acid chain; its full sequence is DNA mismatch repair protein MutS (904 aa).

Position 638 to 645 (638 to 645) interacts with ATP; the sequence is GPNMAGKS. The disordered stretch occupies residues 825 to 869; that stretch reads KSKADGTRRPASYHEAQPLLPGMPEPPSTASAEPPQTVTPPEPPV.

The protein belongs to the DNA mismatch repair MutS family.

This protein is involved in the repair of mismatches in DNA. It is possible that it carries out the mismatch recognition step. This protein has a weak ATPase activity. In Oleidesulfovibrio alaskensis (strain ATCC BAA-1058 / DSM 17464 / G20) (Desulfovibrio alaskensis), this protein is DNA mismatch repair protein MutS.